The sequence spans 508 residues: Phytepsin (508 aa).

The first 27 residues, 1–27 (MGTRGLALALLAAVLLLQTVLPAASEA), serve as a signal peptide directing secretion. A propeptide spans 28–66 (EGLVRIALKKRPIDRNSRVATGLSGGEEQPLLSGANPLR) (activation peptide). In terms of domain architecture, Peptidase A1 spans 84 to 505 (YFGEIGVGTP…DYGKLRIGFA (422 aa)). D102 is an active-site residue. Cystine bridges form between C115–C121 and C280–C284. The active site involves D289. The Saposin B-type domain occupies 314 to 419 (VVSQECKTIV…NQLCNRLPSP (106 aa)). Cystine bridges form between C319-C413, C344-C385, C350-C382, and C427-C464. N-linked (GlcNAc...) asparagine glycosylation occurs at N399.

It belongs to the peptidase A1 family. Heterodimer of two subunits (29 kDa and 11 kDa) processed from the precursor molecule. A large enzyme (32 kDa and 16 kDa) is an intermediate precursor form. Embryo and leaf.

It localises to the vacuole. It carries out the reaction Prefers hydrophobic residues Phe, Val, Ile, Leu, and Ala at P1 and P1', but also cleaves -Phe-|-Asp- and -Asp-|-Asp- bonds in 2S albumin from plant seeds.. In terms of biological role, involved in the breakdown of propeptides of storage proteins in protein-storage vacuoles. The polypeptide is Phytepsin (Hordeum vulgare (Barley)).